A 427-amino-acid polypeptide reads, in one-letter code: Trigger factor (427 aa).

One can recognise a PPIase FKBP-type domain in the interval 163–248; that stretch reads GDTVVIDFVG…VHEVKAKEVP (86 aa).

The protein belongs to the FKBP-type PPIase family. Tig subfamily.

The protein localises to the cytoplasm. The catalysed reaction is [protein]-peptidylproline (omega=180) = [protein]-peptidylproline (omega=0). Functionally, involved in protein export. Acts as a chaperone by maintaining the newly synthesized protein in an open conformation. Functions as a peptidyl-prolyl cis-trans isomerase. The chain is Trigger factor from Streptococcus equi subsp. zooepidemicus (strain MGCS10565).